A 263-amino-acid polypeptide reads, in one-letter code: uncharacterized protein (263 aa).

A signal peptide spans 1-22; that stretch reads MEYLKRLALLISVIILTIFIMG. A lipid anchor (N-palmitoyl cysteine) is attached at C23. C23 is lipidated: S-diacylglycerol cysteine.

This sequence belongs to the staphylococcal tandem lipoprotein family.

Its subcellular location is the cell membrane. This is an uncharacterized protein from Staphylococcus aureus (strain USA300).